The chain runs to 380 residues: GATOR1 complex protein NPRL2 (380 aa).

Positions 1–133 (MGSSCRIECI…SKQKLVPIMT (133 aa)) are interaction with PDPK1. Arg-78 is a GDP binding site. An Asymmetric dimethylarginine modification is found at Arg-78. Residues Lys-158 and Lys-357 each participate in a glycyl lysine isopeptide (Lys-Gly) (interchain with G-Cter in ubiquitin) cross-link.

The protein belongs to the NPR2 family. In terms of assembly, within the GATOR complex, component of the GATOR1 subcomplex, made of DEPDC5, NPRL2 and NPRL3. GATOR1 mediates the strong interaction of the GATOR complex with small GTPases Rag (RagA/RRAGA, RagB/RRAGB, RagC/RRAGC and/or RagD/RRAGD) heterodimers. GATOR1 interacts with GPR155/LYCHOS; interaction takes place in presence of cholesterol and prevents interaction between GATOR1 and KICSTOR. Interacts with PDPK1. In terms of processing, in the presence of abundant amino acids, ubiquitinated at Lys-158 and Lys-357 via 'Lys-6'-linked ubiquitination by the WDR24 component of the GATOR2 complex, thereby inhibiting the GATOR1 complex and promoting mTORC1 activation. Post-translationally, asymmetric dimethylation at Arg-78 by PRMT1 inhibits the GTPase activator activity of the GATOR1 complex and consequently inducing timely mTORC1 activation under methionine-sufficient conditions.

It localises to the lysosome membrane. Catalytic component of the GATOR1 complex, a multiprotein complex that functions as an inhibitor of the amino acid-sensing branch of the mTORC1 pathway. In response to amino acid depletion, the GATOR1 complex has GTPase activating protein (GAP) activity and strongly increases GTP hydrolysis by RagA/RRAGA (or RagB/RRAGB) within heterodimeric Rag complexes, thereby turning them into their inactive GDP-bound form, releasing mTORC1 from lysosomal surface and inhibiting mTORC1 signaling. In the presence of abundant amino acids, the GATOR1 complex is ubiquitinated and inhibited by GATOR2. Within the GATOR1 complex, NPRL2 constitutes the catalytic subunit that mediates the GTPase activator activity and under methionine-sufficient conditions, the GTPase activator activity is inhibited by PRMT1 through methylation and consequently inducing timely mTORC1 activation. Functionally, suppresses Src-dependent tyrosine phosphorylation and activation of PDPK1 and its downstream signaling. Down-regulates PDPK1 kinase activity by interfering with tyrosine phosphorylation at 'Tyr-9', 'Tyr-373' and 'Tyr-376' residues. May act as a tumor suppressor. Suppresses cell growth and enhances sensitivity to various anticancer drugs. This is GATOR1 complex protein NPRL2 from Bos taurus (Bovine).